We begin with the raw amino-acid sequence, 401 residues long: S-adenosylmethionine synthase (401 aa).

136-141 is an ATP binding site; it reads GQGSVD.

Belongs to the AdoMet synthase 2 family. It depends on Mg(2+) as a cofactor.

The catalysed reaction is L-methionine + ATP + H2O = S-adenosyl-L-methionine + phosphate + diphosphate. It participates in amino-acid biosynthesis; S-adenosyl-L-methionine biosynthesis; S-adenosyl-L-methionine from L-methionine: step 1/1. Catalyzes the formation of S-adenosylmethionine from methionine and ATP. The sequence is that of S-adenosylmethionine synthase (mat) from Pyrococcus abyssi (strain GE5 / Orsay).